Here is a 661-residue protein sequence, read N- to C-terminus: Ubiquitin carboxyl-terminal hydrolase 51 (661 aa).

The segment at 1–144 (MRGTQGAQEM…SENSLLEVGS (144 aa)) is disordered. Positions 21 to 30 (TSENLTSRGS) are enriched in polar residues. A compositionally biased stretch (basic residues) spans 53-71 (PRRKPRPRPQPRSRSRGGR). The segment covering 75-96 (APPPPPAKPPPPPPAPPPPPLP) has biased composition (pro residues). The UBP-type zinc-finger motif lies at 149–267 (TGCCHVESFK…KETKEKILGL (119 aa)). Positions 151, 153, 192, 195, 205, 208, 213, 218, 222, 228, 241, and 244 each coordinate Zn(2+). One can recognise a USP domain in the interval 320 to 656 (RGLINLGNTC…EGYLLFYHRQ (337 aa)). Cysteine 329 acts as the Nucleophile in catalysis. Catalysis depends on histidine 615, which acts as the Proton acceptor.

The protein belongs to the peptidase C19 family. In terms of assembly, interacts with H2A.

The protein localises to the chromosome. It carries out the reaction Thiol-dependent hydrolysis of ester, thioester, amide, peptide and isopeptide bonds formed by the C-terminal Gly of ubiquitin (a 76-residue protein attached to proteins as an intracellular targeting signal).. In terms of biological role, specifically deubiquitinates 'Lys-14' (H2AK13Ub) and 'Lys-16'(H2AK15Ub) of histone H2A regulating the DNA damage response at double-strand breaks (DSBs). USP51 is recruited to chromatin after DNA damage and regulates the dynamic assembly/disassembly of TP53BP1 and BRCA1. Functions in DNA double-strand break repair also by mediating the deubiquitination and subsequent stabilization of DGCR8, leading to the recruitment of DGCR8 binding partners to double strand breaks such as RNF168 or MDC1. In addition, promotes the deubiquitination and stabilization of the transcriptional repressor ZEB1. The protein is Ubiquitin carboxyl-terminal hydrolase 51 of Mus musculus (Mouse).